A 55-amino-acid polypeptide reads, in one-letter code: Large ribosomal subunit protein bL33 (55 aa).

The protein belongs to the bacterial ribosomal protein bL33 family.

This Buchnera aphidicola subsp. Schizaphis graminum (strain Sg) protein is Large ribosomal subunit protein bL33.